Reading from the N-terminus, the 321-residue chain is Ribose-phosphate pyrophosphokinase 1 (321 aa).

4 residues coordinate Mg(2+): Asp131, His133, Asp142, and Asp146.

The protein belongs to the ribose-phosphate pyrophosphokinase family.

It carries out the reaction D-ribose 5-phosphate + ATP = 5-phospho-alpha-D-ribose 1-diphosphate + AMP + H(+). The chain is Ribose-phosphate pyrophosphokinase 1 (PRS1) from Candida albicans (Yeast).